A 451-amino-acid polypeptide reads, in one-letter code: MGRRYFGTDGIRGTVGEGPITPDFVLRLGYAAGKVLASSAEVAAGSRPTVLIGKDTRVSGYMLEAALEAGFSAAGVDVMLAGPMPTPGVAYLTRALRLSAGVVISASHNPYHDNGIKFFSADGNKLPDDTEAAIEAWLDKPLECASSDGLGKARRLDDAAGRYIEFCKSTFPAAFNLRGLKLVIDCAHGAAYQIAPHVFHELGADVIPIGVAPNGFNINDGVGATAPDALVRAVRANHADLGIALDGDADRLQVVDSTGRLYNGDELLYVLVKDRIATDGKVEGAVGTLMTNLAVEVALQREGVKFVRAAVGDRYVLEQLREHGWQLGAEGSGHILSLDRHSTGDGIVSALLVLAALKRSGQTLAQMLDGVTLFPQKLINVRMKPGADWKGSTSIRAAIDTAEAALAGSGRVLIRASGTEPVLRVMVEAQQAADAVRHAETIADAVRAATT.

Residue S107 is the Phosphoserine intermediate of the active site. Mg(2+)-binding residues include S107, D246, D248, and D250. S107 carries the phosphoserine modification.

This sequence belongs to the phosphohexose mutase family. Requires Mg(2+) as cofactor. In terms of processing, activated by phosphorylation.

It catalyses the reaction alpha-D-glucosamine 1-phosphate = D-glucosamine 6-phosphate. Its function is as follows. Catalyzes the conversion of glucosamine-6-phosphate to glucosamine-1-phosphate. This chain is Phosphoglucosamine mutase, found in Burkholderia lata (strain ATCC 17760 / DSM 23089 / LMG 22485 / NCIMB 9086 / R18194 / 383).